The chain runs to 357 residues: Cobalt-precorrin-5B C(1)-methyltransferase (357 aa).

It belongs to the CbiD family.

It carries out the reaction Co-precorrin-5B + S-adenosyl-L-methionine = Co-precorrin-6A + S-adenosyl-L-homocysteine. The protein operates within cofactor biosynthesis; adenosylcobalamin biosynthesis; cob(II)yrinate a,c-diamide from sirohydrochlorin (anaerobic route): step 6/10. In terms of biological role, catalyzes the methylation of C-1 in cobalt-precorrin-5B to form cobalt-precorrin-6A. The chain is Cobalt-precorrin-5B C(1)-methyltransferase from Alkaliphilus oremlandii (strain OhILAs) (Clostridium oremlandii (strain OhILAs)).